The following is a 92-amino-acid chain: Co-chaperonin GroES (92 aa).

Belongs to the GroES chaperonin family. In terms of assembly, heptamer of 7 subunits arranged in a ring. Interacts with the chaperonin GroEL.

The protein resides in the cytoplasm. Its function is as follows. Together with the chaperonin GroEL, plays an essential role in assisting protein folding. The GroEL-GroES system forms a nano-cage that allows encapsulation of the non-native substrate proteins and provides a physical environment optimized to promote and accelerate protein folding. GroES binds to the apical surface of the GroEL ring, thereby capping the opening of the GroEL channel. The polypeptide is Co-chaperonin GroES (Thermotoga neapolitana).